The sequence spans 206 residues: Large ribosomal subunit protein uL4 (206 aa).

The segment at 43–78 (ARSGNRKQKDREEVHHTTKKPWRQKGTGRARAGMSS) is disordered. Residues 49–58 (KQKDREEVHH) show a composition bias toward basic and acidic residues. The span at 59 to 70 (TTKKPWRQKGTG) shows a compositional bias: basic residues.

This sequence belongs to the universal ribosomal protein uL4 family. Part of the 50S ribosomal subunit.

Its function is as follows. One of the primary rRNA binding proteins, this protein initially binds near the 5'-end of the 23S rRNA. It is important during the early stages of 50S assembly. It makes multiple contacts with different domains of the 23S rRNA in the assembled 50S subunit and ribosome. Forms part of the polypeptide exit tunnel. In Janthinobacterium sp. (strain Marseille) (Minibacterium massiliensis), this protein is Large ribosomal subunit protein uL4.